Reading from the N-terminus, the 187-residue chain is Ribosome-recycling factor (187 aa).

Belongs to the RRF family.

It is found in the cytoplasm. In terms of biological role, responsible for the release of ribosomes from messenger RNA at the termination of protein biosynthesis. May increase the efficiency of translation by recycling ribosomes from one round of translation to another. The sequence is that of Ribosome-recycling factor from Anaeromyxobacter sp. (strain Fw109-5).